Reading from the N-terminus, the 418-residue chain is Arrestin domain-containing protein 4 (418 aa).

Short sequence motifs (PPxY motif) lie at residues 350–353 (PPNY) and 395–398 (PPLY).

The protein belongs to the arrestin family. As to quaternary structure, interacts with ADRB2. Interacts (via PPxY motifs) with ITCH, NEDD4L and WWP2. Interacts with AVPR2. Identified in a complex containing at least ARRDC4, AVPR2 and HGS. Interacts with SLC11A2; controls the incorporation of SLC11A2 into extracellular vesicles through an ubiquitination-dependent mechanism. Interacts with TRIM65.

Its subcellular location is the early endosome. It localises to the cell membrane. The protein localises to the cytoplasmic vesicle. Its function is as follows. Functions as an adapter recruiting ubiquitin-protein ligases to their specific substrates. Plays a role in endocytosis of activated G protein-coupled receptors (GPCRs). Through an ubiquitination-dependent mechanism also plays a role in the incorporation of SLC11A2 into extracellular vesicles. May play a role in glucose uptake. Participates in innate immune response by promoting IFIH1/MDA5 activation through interaction with TRIM65. This is Arrestin domain-containing protein 4 (ARRDC4) from Homo sapiens (Human).